Consider the following 316-residue polypeptide: UDP-3-O-acylglucosamine N-acyltransferase 2 (316 aa).

The active-site Proton acceptor is the H230.

It belongs to the transferase hexapeptide repeat family. LpxD subfamily. As to quaternary structure, homotrimer.

The catalysed reaction is a UDP-3-O-[(3R)-3-hydroxyacyl]-alpha-D-glucosamine + a (3R)-hydroxyacyl-[ACP] = a UDP-2-N,3-O-bis[(3R)-3-hydroxyacyl]-alpha-D-glucosamine + holo-[ACP] + H(+). Its pathway is bacterial outer membrane biogenesis; LPS lipid A biosynthesis. Its function is as follows. Catalyzes the N-acylation of UDP-3-O-acylglucosamine using 3-hydroxyacyl-ACP as the acyl donor. Is involved in the biosynthesis of lipid A, a phosphorylated glycolipid that anchors the lipopolysaccharide to the outer membrane of the cell. The sequence is that of UDP-3-O-acylglucosamine N-acyltransferase 2 from Sulfurimonas denitrificans (strain ATCC 33889 / DSM 1251) (Thiomicrospira denitrificans (strain ATCC 33889 / DSM 1251)).